Consider the following 142-residue polypeptide: MKTYLAKPNEVPKKWYVIDATGKPLGRLAAKIAVILRGKHKPQFTPNVDTGDYVIVVNAEKVVLTGKKLDKDGYRYHTKYPGGLKFIPYRRLLEKHPEKAIEIAVRGMLPKNRLRDRFMRKLKVYRGPNHPHAAQKPEVLEI.

Belongs to the universal ribosomal protein uL13 family. Part of the 50S ribosomal subunit.

In terms of biological role, this protein is one of the early assembly proteins of the 50S ribosomal subunit, although it is not seen to bind rRNA by itself. It is important during the early stages of 50S assembly. The polypeptide is Large ribosomal subunit protein uL13 (Caldicellulosiruptor saccharolyticus (strain ATCC 43494 / DSM 8903 / Tp8T 6331)).